A 231-amino-acid polypeptide reads, in one-letter code: ATP phosphoribosyltransferase (231 aa).

The protein belongs to the ATP phosphoribosyltransferase family. Short subfamily. As to quaternary structure, heteromultimer composed of HisG and HisZ subunits.

The protein resides in the cytoplasm. It carries out the reaction 1-(5-phospho-beta-D-ribosyl)-ATP + diphosphate = 5-phospho-alpha-D-ribose 1-diphosphate + ATP. Its pathway is amino-acid biosynthesis; L-histidine biosynthesis; L-histidine from 5-phospho-alpha-D-ribose 1-diphosphate: step 1/9. Its function is as follows. Catalyzes the condensation of ATP and 5-phosphoribose 1-diphosphate to form N'-(5'-phosphoribosyl)-ATP (PR-ATP). Has a crucial role in the pathway because the rate of histidine biosynthesis seems to be controlled primarily by regulation of HisG enzymatic activity. This Brucella melitensis biotype 2 (strain ATCC 23457) protein is ATP phosphoribosyltransferase.